A 252-amino-acid chain; its full sequence is tRNA (guanine-N(1)-)-methyltransferase (252 aa).

S-adenosyl-L-methionine contacts are provided by residues G116 and L135–L140.

This sequence belongs to the RNA methyltransferase TrmD family. As to quaternary structure, homodimer.

It localises to the cytoplasm. It carries out the reaction guanosine(37) in tRNA + S-adenosyl-L-methionine = N(1)-methylguanosine(37) in tRNA + S-adenosyl-L-homocysteine + H(+). In terms of biological role, specifically methylates guanosine-37 in various tRNAs. This chain is tRNA (guanine-N(1)-)-methyltransferase, found in Limosilactobacillus reuteri (strain DSM 20016) (Lactobacillus reuteri).